Consider the following 275-residue polypeptide: 4-deoxy-L-threo-5-hexosulose-uronate ketol-isomerase (275 aa).

Residues His-193, His-195, Glu-200, and His-242 each coordinate Zn(2+).

Belongs to the KduI family. Zn(2+) serves as cofactor.

The enzyme catalyses 5-dehydro-4-deoxy-D-glucuronate = 3-deoxy-D-glycero-2,5-hexodiulosonate. It participates in glycan metabolism; pectin degradation; 2-dehydro-3-deoxy-D-gluconate from pectin: step 4/5. Catalyzes the isomerization of 5-dehydro-4-deoxy-D-glucuronate to 3-deoxy-D-glycero-2,5-hexodiulosonate. The protein is 4-deoxy-L-threo-5-hexosulose-uronate ketol-isomerase of Bacillus pumilus (strain SAFR-032).